We begin with the raw amino-acid sequence, 434 residues long: Eukaryotic translation initiation factor 3 subunit E-1 (434 aa).

The PCI domain maps to F219–L392.

The protein belongs to the eIF-3 subunit E family. In terms of assembly, component of the eukaryotic translation initiation factor 3 (eIF-3) complex. The eIF-3 complex interacts with pix. Interacts with mxt.

It localises to the cytoplasm. In terms of biological role, component of the eukaryotic translation initiation factor 3 (eIF-3) complex, which is involved in protein synthesis of a specialized repertoire of mRNAs and, together with other initiation factors, stimulates binding of mRNA and methionyl-tRNAi to the 40S ribosome. The eIF-3 complex specifically targets and initiates translation of a subset of mRNAs involved in cell proliferation. The chain is Eukaryotic translation initiation factor 3 subunit E-1 (eIF3-S6-1) from Drosophila willistoni (Fruit fly).